The primary structure comprises 70 residues: Large ribosomal subunit protein bL31 (70 aa).

Residues Cys17, Cys19, Cys37, and Cys40 each contribute to the Zn(2+) site.

It belongs to the bacterial ribosomal protein bL31 family. Type A subfamily. In terms of assembly, part of the 50S ribosomal subunit. Requires Zn(2+) as cofactor.

Functionally, binds the 23S rRNA. This Clostridium acetobutylicum (strain ATCC 824 / DSM 792 / JCM 1419 / IAM 19013 / LMG 5710 / NBRC 13948 / NRRL B-527 / VKM B-1787 / 2291 / W) protein is Large ribosomal subunit protein bL31.